A 688-amino-acid polypeptide reads, in one-letter code: Translation initiation factor IF-2 (688 aa).

2 stretches are compositionally biased toward basic and acidic residues: residues 53-62 (GKEKSEKTKE) and 86-95 (KRDDKNEKVN). Residues 53-100 (GKEKSEKTKEEDDEIETTAKNPIKESMNNKKSNKRDDKNEKVNTENAE) form a disordered region. Positions 187–354 (KRSPIITVMG…MILLSSEILE (168 aa)) constitute a tr-type G domain. The tract at residues 196-203 (GHVDHGKT) is G1. 196-203 (GHVDHGKT) lines the GTP pocket. The tract at residues 221-225 (GITQH) is G2. Residues 242-245 (DTPG) are G3. GTP is bound by residues 242-246 (DTPGH) and 296-299 (NKID). Residues 296-299 (NKID) form a G4 region. The G5 stretch occupies residues 332 to 334 (SAH).

It belongs to the TRAFAC class translation factor GTPase superfamily. Classic translation factor GTPase family. IF-2 subfamily.

It is found in the cytoplasm. Functionally, one of the essential components for the initiation of protein synthesis. Protects formylmethionyl-tRNA from spontaneous hydrolysis and promotes its binding to the 30S ribosomal subunits. Also involved in the hydrolysis of GTP during the formation of the 70S ribosomal complex. This is Translation initiation factor IF-2 from Clostridium botulinum (strain ATCC 19397 / Type A).